Consider the following 334-residue polypeptide: Serine/Arginine-related protein 53 (334 aa).

The segment covering 1–13 (MGRRSSDTEEESR) has biased composition (basic and acidic residues). 3 disordered regions span residues 1–179 (MGRR…HLPP), 201–220 (LKAK…EDQA), and 243–290 (QTFR…SIPT). Basic residues-rich tracts occupy residues 14 to 24 (SKRKKKHRRRS) and 35 to 50 (YSRK…KSRS). The span at 51 to 62 (WSRDLQPRSHSY) shows a compositional bias: basic and acidic residues. Positions 78 to 118 (SRRKRSRSRSRGRGKSYRVQRSRSKSRTRRSRSRPRLRSHS) are enriched in basic residues. Composition is skewed to basic and acidic residues over residues 132 to 166 (RSRD…KRGE), 201 to 218 (LKAK…KEED), and 247 to 259 (SSKE…EPSE). The stretch at 180-236 (AEQAKARLQLVLEAAAKADEALKAKERNEEEAKRRKEEDQATLVEQVKRVKEIEAIE) forms a coiled coil.

Interacts (via Arg/Ser-rich domain) with LUC7L3, RBM39 and RSF1. In terms of processing, phosphorylated. Widely expressed. Expressed in brain, spinal cord, cerebellum.

It localises to the nucleus. The protein resides in the nucleus speckle. It is found in the cytoplasm. Functionally, has a role in alternative splicing and transcription regulation. Involved in both constitutive and alternative pre-mRNA splicing. May have a role in the recognition of the 3' splice site during the second step of splicing. This Homo sapiens (Human) protein is Serine/Arginine-related protein 53 (RSRC1).